The following is a 509-amino-acid chain: Bifunctional purine biosynthesis protein PurH (509 aa).

The MGS-like domain occupies 1-144 (MKRALISVSD…KNYAAVTVVV (144 aa)).

Belongs to the PurH family.

It carries out the reaction (6R)-10-formyltetrahydrofolate + 5-amino-1-(5-phospho-beta-D-ribosyl)imidazole-4-carboxamide = 5-formamido-1-(5-phospho-D-ribosyl)imidazole-4-carboxamide + (6S)-5,6,7,8-tetrahydrofolate. The catalysed reaction is IMP + H2O = 5-formamido-1-(5-phospho-D-ribosyl)imidazole-4-carboxamide. Its pathway is purine metabolism; IMP biosynthesis via de novo pathway; 5-formamido-1-(5-phospho-D-ribosyl)imidazole-4-carboxamide from 5-amino-1-(5-phospho-D-ribosyl)imidazole-4-carboxamide (10-formyl THF route): step 1/1. It participates in purine metabolism; IMP biosynthesis via de novo pathway; IMP from 5-formamido-1-(5-phospho-D-ribosyl)imidazole-4-carboxamide: step 1/1. The sequence is that of Bifunctional purine biosynthesis protein PurH from Listeria monocytogenes serotype 4a (strain HCC23).